We begin with the raw amino-acid sequence, 289 residues long: ATP synthase mitochondrial F1 complex assembly factor 2 (289 aa).

Residues 1 to 40 (MWRRCLRLRDVGRRLLNLPRSGLTASEGLGPKLPTPIRAY) constitute a mitochondrion transit peptide. Position 133 is an N6-succinyllysine (Lys133).

This sequence belongs to the ATP12 family. As to quaternary structure, interacts with ATP5F1B; involved in the assembly of the F1 component of the mitochondrial ATP synthase (ATPase). Interacts with FMC1.

The protein resides in the mitochondrion inner membrane. In terms of biological role, plays a role in the assembly of the F1 component of the mitochondrial ATP synthase (ATPase). This is ATP synthase mitochondrial F1 complex assembly factor 2 (ATPAF2) from Bos taurus (Bovine).